The sequence spans 71 residues: uncharacterized protein (71 aa).

Residues 52–71 (KEKFERKEDEKSKPKGVRED) form a disordered region.

This is an uncharacterized protein from Archaeoglobus fulgidus (strain ATCC 49558 / DSM 4304 / JCM 9628 / NBRC 100126 / VC-16).